The sequence spans 372 residues: Pyruvylated Gal-beta-1,3-epitope synthesis protein 5 (372 aa).

The Cytoplasmic segment spans residues 1 to 12; that stretch reads MGLPLRIFAGNG. A helical; Signal-anchor for type II membrane protein transmembrane segment spans residues 13–35; the sequence is IGGWCLRLFLFGSLILLLRPLIF. Residues 36-372 lie on the Lumenal side of the membrane; it reads YSNTTMKKLK…LRIIEQWKQL (337 aa). N-linked (GlcNAc...) asparagine glycosylation is found at N38 and N128.

It is found in the golgi apparatus membrane. In terms of biological role, involved in cell wall biogenesis. Has a role in the addition of Gal-beta1,3 moeities to galactomannans and their subsequent pyruvylation. Has a role in meiosis. In Schizosaccharomyces pombe (strain 972 / ATCC 24843) (Fission yeast), this protein is Pyruvylated Gal-beta-1,3-epitope synthesis protein 5 (pvg5).